We begin with the raw amino-acid sequence, 459 residues long: Phosphoglucosamine mutase (459 aa).

The active-site Phosphoserine intermediate is Ser100. Ser100, Asp256, Asp258, and Asp260 together coordinate Mg(2+). The residue at position 100 (Ser100) is a Phosphoserine.

The protein belongs to the phosphohexose mutase family. Mg(2+) is required as a cofactor. Post-translationally, activated by phosphorylation.

It catalyses the reaction alpha-D-glucosamine 1-phosphate = D-glucosamine 6-phosphate. Catalyzes the conversion of glucosamine-6-phosphate to glucosamine-1-phosphate. This chain is Phosphoglucosamine mutase, found in Heliobacterium modesticaldum (strain ATCC 51547 / Ice1).